The sequence spans 65 residues: Large ribosomal subunit protein bL28 (65 aa).

A disordered region spans residues 1 to 21 (MAKKDQLTLRGPLYGNNRSHS).

Belongs to the bacterial ribosomal protein bL28 family.

In Mycoplasma pneumoniae (strain ATCC 29342 / M129 / Subtype 1) (Mycoplasmoides pneumoniae), this protein is Large ribosomal subunit protein bL28.